The following is a 476-amino-acid chain: UDP-N-acetylmuramate--L-alanine ligase (476 aa).

Residue Gly-121–Thr-127 participates in ATP binding.

It belongs to the MurCDEF family.

It localises to the cytoplasm. The enzyme catalyses UDP-N-acetyl-alpha-D-muramate + L-alanine + ATP = UDP-N-acetyl-alpha-D-muramoyl-L-alanine + ADP + phosphate + H(+). The protein operates within cell wall biogenesis; peptidoglycan biosynthesis. In terms of biological role, cell wall formation. This chain is UDP-N-acetylmuramate--L-alanine ligase, found in Clavibacter michiganensis subsp. michiganensis (strain NCPPB 382).